Here is a 101-residue protein sequence, read N- to C-terminus: Large ribosomal subunit protein uL23 (101 aa).

The protein belongs to the universal ribosomal protein uL23 family. Part of the 50S ribosomal subunit. Contacts protein L29, and trigger factor when it is bound to the ribosome.

In terms of biological role, one of the early assembly proteins it binds 23S rRNA. One of the proteins that surrounds the polypeptide exit tunnel on the outside of the ribosome. Forms the main docking site for trigger factor binding to the ribosome. This Wigglesworthia glossinidia brevipalpis protein is Large ribosomal subunit protein uL23.